The following is a 216-amino-acid chain: uncharacterized protein (216 aa).

This is an uncharacterized protein from Methylophilus leisingeri (strain DSM 6813 / VKM B-2013 / DM11).